The primary structure comprises 156 residues: Probable chemoreceptor glutamine deamidase CheD (156 aa).

The protein belongs to the CheD family.

It carries out the reaction L-glutaminyl-[protein] + H2O = L-glutamyl-[protein] + NH4(+). In terms of biological role, probably deamidates glutamine residues to glutamate on methyl-accepting chemotaxis receptors (MCPs), playing an important role in chemotaxis. The chain is Probable chemoreceptor glutamine deamidase CheD from Sulfurimonas denitrificans (strain ATCC 33889 / DSM 1251) (Thiomicrospira denitrificans (strain ATCC 33889 / DSM 1251)).